Reading from the N-terminus, the 364-residue chain is MANKTVLFNKHLESNAKMVDFHGWDMPLNYGSQIEEHHAVRQDAGMFDVSHMTVVDVTGTDACAFLRKLLANDVAKLKVPGKALYGGMLDDNAGIIDDLITYYLTDTFYRVVVNSATREKDLAWIAKQSQGFDVTVTERPELAMIAVQGPNAKAKAAAVFSSDQNAAIEGMKPFFGKQAGSLFIATTGYTGEVGYEIIVPETEAEALWQALLDQGVKPCGLGARDTLRLEAGMNLYGLDMDETINPLAANMGWTIAWEPTDRDFIGRKALEALRDAGTDKLVGLVMEEKGVLRHDMPVFFTDAAGVEQQGVITSGTFSPTLGYSIAMARVPNSIGDTAEVEMRKKRVAVRVVAPNFVRNGKQAF.

It belongs to the GcvT family. As to quaternary structure, the glycine cleavage system is composed of four proteins: P, T, L and H.

The catalysed reaction is N(6)-[(R)-S(8)-aminomethyldihydrolipoyl]-L-lysyl-[protein] + (6S)-5,6,7,8-tetrahydrofolate = N(6)-[(R)-dihydrolipoyl]-L-lysyl-[protein] + (6R)-5,10-methylene-5,6,7,8-tetrahydrofolate + NH4(+). In terms of biological role, the glycine cleavage system catalyzes the degradation of glycine. The protein is Aminomethyltransferase of Shewanella sp. (strain MR-4).